Consider the following 202-residue polypeptide: Small ribosomal subunit protein uS3 (202 aa).

The 70-residue stretch at 18–87 folds into the KH type-2 domain; sequence LNEYLQRQLV…NPQIDVVEVP (70 aa).

It belongs to the universal ribosomal protein uS3 family. Part of the 30S ribosomal subunit.

Its function is as follows. Binds the lower part of the 30S subunit head. This Thermofilum pendens (strain DSM 2475 / Hrk 5) protein is Small ribosomal subunit protein uS3.